The sequence spans 229 residues: Cytochrome c oxidase subunit 2 (229 aa).

The Mitochondrial intermembrane portion of the chain corresponds to 1–26; the sequence is MSTWANLGLQDSASPLMEQLIFFHDH. The helical transmembrane segment at 27–48 threads the bilayer; it reads ALLILVMITVLVGYLMVMLFFN. Residues 49–62 are Mitochondrial matrix-facing; that stretch reads SYVNRFLLHGQLIE. Residues 63–82 traverse the membrane as a helical segment; it reads MIWTILPAIILLFIAMPSLR. Residues 83–229 are Mitochondrial intermembrane-facing; sequence LLYLLDEINE…IKWISDKVNS (147 aa). The Cu cation site is built by histidine 161, cysteine 196, glutamate 198, cysteine 200, histidine 204, and methionine 207. Glutamate 198 is a binding site for Mg(2+).

The protein belongs to the cytochrome c oxidase subunit 2 family. As to quaternary structure, component of the cytochrome c oxidase (complex IV, CIV), a multisubunit enzyme composed of a catalytic core of 3 subunits and several supernumerary subunits. The complex exists as a monomer or a dimer and forms supercomplexes (SCs) in the inner mitochondrial membrane with ubiquinol-cytochrome c oxidoreductase (cytochrome b-c1 complex, complex III, CIII). Cu cation is required as a cofactor.

It localises to the mitochondrion inner membrane. The catalysed reaction is 4 Fe(II)-[cytochrome c] + O2 + 8 H(+)(in) = 4 Fe(III)-[cytochrome c] + 2 H2O + 4 H(+)(out). Its function is as follows. Component of the cytochrome c oxidase, the last enzyme in the mitochondrial electron transport chain which drives oxidative phosphorylation. The respiratory chain contains 3 multisubunit complexes succinate dehydrogenase (complex II, CII), ubiquinol-cytochrome c oxidoreductase (cytochrome b-c1 complex, complex III, CIII) and cytochrome c oxidase (complex IV, CIV), that cooperate to transfer electrons derived from NADH and succinate to molecular oxygen, creating an electrochemical gradient over the inner membrane that drives transmembrane transport and the ATP synthase. Cytochrome c oxidase is the component of the respiratory chain that catalyzes the reduction of oxygen to water. Electrons originating from reduced cytochrome c in the intermembrane space (IMS) are transferred via the dinuclear copper A center (CU(A)) of subunit 2 and heme A of subunit 1 to the active site in subunit 1, a binuclear center (BNC) formed by heme A3 and copper B (CU(B)). The BNC reduces molecular oxygen to 2 water molecules using 4 electrons from cytochrome c in the IMS and 4 protons from the mitochondrial matrix. The polypeptide is Cytochrome c oxidase subunit 2 (mt:CoII) (Drosophila subobscura (Fruit fly)).